The sequence spans 232 residues: Lipopolysaccharide core heptose(II) kinase WaaY (232 aa).

Belongs to the protein kinase superfamily. RfaY/WaaY family.

The catalysed reaction is alpha-D-Glc-(1-&gt;3)-[L-alpha-D-Hep-(1-&gt;7)]-L-alpha-D-Hep-(1-&gt;3)-4-O-PO3(2-)-L-alpha-D-Hep-(1-&gt;5)-[alpha-Kdo-(2-&gt;4)]-alpha-Kdo-(2-&gt;6)-lipid A + ATP = alpha-D-Glc-(1-&gt;3)-[L-alpha-D-Hep-(1-&gt;7)]-4-O-PO3(2-)-L-alpha-D-Hep-(1-&gt;3)-4-O-PO3(2-)-L-alpha-D-Hep-(1-&gt;5)-[alpha-Kdo-(2-&gt;4)]-alpha-Kdo-(2-&gt;6)-lipid A + ADP + H(+). It functions in the pathway bacterial outer membrane biogenesis; LPS core biosynthesis. Its function is as follows. Kinase involved in the biosynthesis of the core oligosaccharide region of lipopolysaccharide (LPS). Catalyzes the phosphorylation of the second heptose unit (HepII) of the inner core. The chain is Lipopolysaccharide core heptose(II) kinase WaaY from Salmonella typhimurium (strain LT2 / SGSC1412 / ATCC 700720).